The following is a 93-amino-acid chain: DNA-directed RNA polymerase subunit omega (93 aa).

The protein belongs to the RNA polymerase subunit omega family. As to quaternary structure, the RNAP catalytic core consists of 2 alpha, 1 beta, 1 beta' and 1 omega subunit. When a sigma factor is associated with the core the holoenzyme is formed, which can initiate transcription.

The enzyme catalyses RNA(n) + a ribonucleoside 5'-triphosphate = RNA(n+1) + diphosphate. In terms of biological role, promotes RNA polymerase assembly. Latches the N- and C-terminal regions of the beta' subunit thereby facilitating its interaction with the beta and alpha subunits. In Corynebacterium urealyticum (strain ATCC 43042 / DSM 7109), this protein is DNA-directed RNA polymerase subunit omega.